A 264-amino-acid polypeptide reads, in one-letter code: Orotidine 5'-phosphate decarboxylase (264 aa).

Substrate contacts are provided by residues Asp-37, 59-61 (KTH), 91-100 (DRKFADIGNT), Tyr-217, and Arg-235. Lys-93 functions as the Proton donor in the catalytic mechanism.

This sequence belongs to the OMP decarboxylase family.

It carries out the reaction orotidine 5'-phosphate + H(+) = UMP + CO2. It participates in pyrimidine metabolism; UMP biosynthesis via de novo pathway; UMP from orotate: step 2/2. The chain is Orotidine 5'-phosphate decarboxylase (URA3) from Torulaspora delbrueckii (Yeast).